A 210-amino-acid polypeptide reads, in one-letter code: Orotate phosphoribosyltransferase (210 aa).

5-phospho-alpha-D-ribose 1-diphosphate contacts are provided by residues arginine 94, lysine 98, histidine 100, and 120-128 (EDLISTGGS). Residue serine 124 coordinates orotate.

The protein belongs to the purine/pyrimidine phosphoribosyltransferase family. PyrE subfamily. In terms of assembly, homodimer. The cofactor is Mg(2+).

The enzyme catalyses orotidine 5'-phosphate + diphosphate = orotate + 5-phospho-alpha-D-ribose 1-diphosphate. It functions in the pathway pyrimidine metabolism; UMP biosynthesis via de novo pathway; UMP from orotate: step 1/2. Functionally, catalyzes the transfer of a ribosyl phosphate group from 5-phosphoribose 1-diphosphate to orotate, leading to the formation of orotidine monophosphate (OMP). The protein is Orotate phosphoribosyltransferase of Bacillus cereus (strain ATCC 14579 / DSM 31 / CCUG 7414 / JCM 2152 / NBRC 15305 / NCIMB 9373 / NCTC 2599 / NRRL B-3711).